A 1381-amino-acid polypeptide reads, in one-letter code: DNA-directed RNA polymerase subunit beta'' (1381 aa).

Residues cysteine 220, cysteine 293, cysteine 300, and cysteine 303 each coordinate Zn(2+).

The protein belongs to the RNA polymerase beta' chain family. RpoC2 subfamily. As to quaternary structure, in plastids the minimal PEP RNA polymerase catalytic core is composed of four subunits: alpha, beta, beta', and beta''. When a (nuclear-encoded) sigma factor is associated with the core the holoenzyme is formed, which can initiate transcription. Zn(2+) is required as a cofactor.

It localises to the plastid. Its subcellular location is the chloroplast. The catalysed reaction is RNA(n) + a ribonucleoside 5'-triphosphate = RNA(n+1) + diphosphate. Functionally, DNA-dependent RNA polymerase catalyzes the transcription of DNA into RNA using the four ribonucleoside triphosphates as substrates. The polypeptide is DNA-directed RNA polymerase subunit beta'' (Draba nemorosa (Woodland whitlowgrass)).